Consider the following 166-residue polypeptide: Lymphocyte antigen 6G6e (166 aa).

An N-terminal signal peptide occupies residues 1-18 (MGPSSAFLGVLFLSGTLG). The UPAR/Ly6 domain maps to 28-151 (LRCYTCSFAK…PPPNLPLMTL (124 aa)). Disulfide bonds link Cys30–Cys52, Cys33–Cys39, Cys110–Cys129, and Cys130–Cys135.

In terms of assembly, interacts with CHRNA4. In terms of processing, O-glycosylated. Contains sialic acid residues.

The protein localises to the cell surface. The protein resides in the cell membrane. It localises to the cell projection. Functionally, believed to act as a modulator of nicotinic acetylcholine receptors (nAChRs) activity. In vitro potentiates alpha-3:beta-4-containing nAChRs maximum response by increasing peak current and slowing down receptor desensitization; the activity is dependent on its cell surface localization. This Mus musculus (Mouse) protein is Lymphocyte antigen 6G6e (Ly6g6e).